The sequence spans 286 residues: Expansin-like protein 1 (286 aa).

The N-terminal stretch at 1–21 (MKTFVLFVILLCLTFLSISKS) is a signal peptide. Residues 22–265 (ETCPFSQSLV…TGASIGTPSD (244 aa)) lie on the Extracellular side of the membrane. An Expansin-like EG45 domain is found at 44–145 (AGNCGYENLM…YKVPCGVNGN (102 aa)). Disulfide bonds link cysteine 47–cysteine 77 and cysteine 80–cysteine 140. N-linked (GlcNAc...) asparagine glycans are attached at residues asparagine 82 and asparagine 89. Residues 266 to 286 (ASSLTLYALFSLTILFLVMLN) traverse the membrane as a helical segment.

The protein belongs to the expansin family. Expansin A subfamily.

It localises to the membrane. In terms of biological role, may serve to lubricate the movement of the cellulose microfibrils during cell growth and wall extension and/or they may serve to maintain the fluid state of the slug cell wall. The protein is Expansin-like protein 1 (expl1) of Dictyostelium discoideum (Social amoeba).